We begin with the raw amino-acid sequence, 268 residues long: 4-diphosphocytidyl-2-C-methyl-D-erythritol kinase (268 aa).

Residue lysine 9 is part of the active site. 88–98 (PPGAGLGGGSS) serves as a coordination point for ATP. Aspartate 130 is a catalytic residue.

It belongs to the GHMP kinase family. IspE subfamily.

The enzyme catalyses 4-CDP-2-C-methyl-D-erythritol + ATP = 4-CDP-2-C-methyl-D-erythritol 2-phosphate + ADP + H(+). It functions in the pathway isoprenoid biosynthesis; isopentenyl diphosphate biosynthesis via DXP pathway; isopentenyl diphosphate from 1-deoxy-D-xylulose 5-phosphate: step 3/6. Functionally, catalyzes the phosphorylation of the position 2 hydroxy group of 4-diphosphocytidyl-2C-methyl-D-erythritol. This is 4-diphosphocytidyl-2-C-methyl-D-erythritol kinase from Aquifex aeolicus (strain VF5).